The primary structure comprises 360 residues: DNA replication and repair protein RecF (360 aa).

30–37 is an ATP binding site; that stretch reads GQNGSGKT.

Belongs to the RecF family.

The protein localises to the cytoplasm. Functionally, the RecF protein is involved in DNA metabolism; it is required for DNA replication and normal SOS inducibility. RecF binds preferentially to single-stranded, linear DNA. It also seems to bind ATP. The protein is DNA replication and repair protein RecF of Shewanella piezotolerans (strain WP3 / JCM 13877).